Here is a 213-residue protein sequence, read N- to C-terminus: Small ribosomal subunit protein uS5 (213 aa).

The disordered stretch occupies residues 1–42 (MSERDRNGGRSADNNRNDRNERGGRNDRGGRNDRRNNQQDER). The S5 DRBM domain occupies 45-108 (YIERVVTINR…EEARKNFFRV (64 aa)).

Belongs to the universal ribosomal protein uS5 family. Part of the 30S ribosomal subunit. Contacts proteins S4 and S8.

In terms of biological role, with S4 and S12 plays an important role in translational accuracy. Functionally, located at the back of the 30S subunit body where it stabilizes the conformation of the head with respect to the body. This Corynebacterium urealyticum (strain ATCC 43042 / DSM 7109) protein is Small ribosomal subunit protein uS5.